The primary structure comprises 146 residues: Urease accessory protein UreE 1 (146 aa).

The protein belongs to the UreE family.

Its subcellular location is the cytoplasm. Its function is as follows. Involved in urease metallocenter assembly. Binds nickel. Probably functions as a nickel donor during metallocenter assembly. The chain is Urease accessory protein UreE 1 from Pseudomonas syringae pv. tomato (strain ATCC BAA-871 / DC3000).